We begin with the raw amino-acid sequence, 472 residues long: Chromosomal replication initiator protein DnaA (472 aa).

The segment at 1-80 (MDTKQIWFTT…YQVNVRVIIS (80 aa)) is domain I, interacts with DnaA modulators. The tract at residues 80–130 (SSATPAPSEPVAVTPSEPSPTTEVAEPSFASFNQAAPMLNQLPLGDPNRSS) is domain II. The tract at residues 131–347 (VLNPRYTFSS…GCLNRVIAYA (217 aa)) is domain III, AAA+ region. 4 residues coordinate ATP: glycine 175, glycine 177, lysine 178, and threonine 179. Positions 348-472 (NLNRTPVTVE…RQRLYGENAR (125 aa)) are domain IV, binds dsDNA.

It belongs to the DnaA family. Oligomerizes as a right-handed, spiral filament on DNA at oriC.

It localises to the cytoplasm. In terms of biological role, plays an essential role in the initiation and regulation of chromosomal replication. ATP-DnaA binds to the origin of replication (oriC) to initiate formation of the DNA replication initiation complex once per cell cycle. Binds the DnaA box (a 9 base pair repeat at the origin) and separates the double-stranded (ds)DNA. Forms a right-handed helical filament on oriC DNA; dsDNA binds to the exterior of the filament while single-stranded (ss)DNA is stabiized in the filament's interior. The ATP-DnaA-oriC complex binds and stabilizes one strand of the AT-rich DNA unwinding element (DUE), permitting loading of DNA polymerase. After initiation quickly degrades to an ADP-DnaA complex that is not apt for DNA replication. Binds acidic phospholipids. The sequence is that of Chromosomal replication initiator protein DnaA from Herpetosiphon aurantiacus (strain ATCC 23779 / DSM 785 / 114-95).